Consider the following 800-residue polypeptide: Putative antiporter subunit mnhA2 (800 aa).

20 helical membrane-spanning segments follow: residues 1–21, 33–53, 78–98, 118–138, 167–187, 207–227, 241–261, 273–293, 300–320, 331–351, 387–407, 424–444, 472–492, 527–547, 595–615, 627–647, 651–671, 676–696, 712–732, and 768–788; these read MSLV…LLTS, IALT…PSVI, GLSL…FFYA, LFMF…MYVF, FMIT…LYIM, ALFI…SAQF, TPVS…FLLL, YIYI…ITAL, GILA…VGIG, IASI…NHAI, LVMM…GFLS, FSLI…IFTF, PWLF…IFFV, GFNI…VLAI, IIMT…RIGL, GPLE…LIFI, LTMV…FIAM, LALT…VSFS, IIKI…IFIA, and LDTL…YTLL.

Belongs to the CPA3 antiporters (TC 2.A.63) subunit A family. In terms of assembly, may form a heterooligomeric complex that consists of seven subunits: mnhA2, mnhB2, mnhC2, mnhD2, mnhE2, mnhF2 and mnhG2.

The protein localises to the cell membrane. The sequence is that of Putative antiporter subunit mnhA2 (mnhA2) from Staphylococcus aureus (strain MRSA252).